The sequence spans 268 residues: Fibroblast growth factor 5 (268 aa).

The N-terminal stretch at 1 to 20 is a signal peptide; sequence MSLSFLLLLFFSHLILSAWA. A disordered region spans residues 26 to 81; that stretch reads LAPKGQPGPAATDRNPRGSSSRQSSSSAMSSSSASSSPAASLGSQGSGLEQSSFQW. Low complexity predominate over residues 43–80; that stretch reads GSSSRQSSSSAMSSSSASSSPAASLGSQGSGLEQSSFQ. N-linked (GlcNAc...) asparagine glycosylation is present at N110. The tract at residues 233–255 is disordered; the sequence is VPEKKKPPSPIKPKIPLSAPRKN.

Belongs to the heparin-binding growth factors family. In terms of assembly, interacts with FGFR1 and FGFR2. Affinity between fibroblast growth factors (FGFs) and their receptors is increased by heparan sulfate glycosaminoglycans that function as coreceptors. In terms of tissue distribution, expressed in neonatal brain.

The protein localises to the secreted. Plays an important role in the regulation of cell proliferation and cell differentiation. Required for normal regulation of the hair growth cycle. Functions as an inhibitor of hair elongation by promoting progression from anagen, the growth phase of the hair follicle, into catagen the apoptosis-induced regression phase. The polypeptide is Fibroblast growth factor 5 (FGF5) (Homo sapiens (Human)).